The following is a 239-amino-acid chain: MKVTLFVTCLVDMFETNVGKATVEVLERLGCEIEFPEAQVCCGQPAYNSGHVEAAKEAMKHMIETFEDAEYIVTPSGSCATMFHEYPHVFKDDPKWAKRAQKVADKTYEFTQFIVDVLKVTDVGASLSGIATIHKSCHMTRMLGVKEAPGILLSNVKGLTVRDLPNVQNCCGFGGTFSVKMTPISEQMVDEKVDSVMETGADYLIGADCGCLLNIGGRIERLGKEVKVMHIAEVLNSRS.

This sequence belongs to the LutA/YkgE family.

In terms of biological role, is involved in L-lactate degradation and allows cells to grow with lactate as the sole carbon source. The sequence is that of Lactate utilization protein A from Bacillus cereus (strain G9842).